Consider the following 180-residue polypeptide: GTP cyclohydrolase 1 (180 aa).

Zn(2+)-binding residues include C71, H74, and C142.

This sequence belongs to the GTP cyclohydrolase I family. As to quaternary structure, toroid-shaped homodecamer, composed of two pentamers of five dimers.

It catalyses the reaction GTP + H2O = 7,8-dihydroneopterin 3'-triphosphate + formate + H(+). It functions in the pathway cofactor biosynthesis; 7,8-dihydroneopterin triphosphate biosynthesis; 7,8-dihydroneopterin triphosphate from GTP: step 1/1. This chain is GTP cyclohydrolase 1, found in Helicobacter pylori (strain HPAG1).